Reading from the N-terminus, the 165-residue chain is Protein NKG7 (165 aa).

A run of 4 helical transmembrane segments spans residues 9-29 (LLGG…DFWF), 61-81 (FSIM…LSCF), 92-112 (LVST…MAVY), and 133-153 (FYLG…SLGA).

The protein belongs to the PMP-22/EMP/MP20 family. Expressed in activated T-cells, in kidney, liver, lung and pancreas. Not expressed in brain, heart, or skeletal muscle. Expressed at high levels in TCR gamma delta-expressing CTL clones, and in some TCR alpha beta-expressing CTL clones (both CD4+ and CD8+), but is not expressed in other TCR alpha beta-expressing CTL clones and in cell lines representing B-cells, monocytes, and myeloid cells.

Its subcellular location is the cell membrane. It localises to the cytolytic granule membrane. Its function is as follows. Regulates cytotoxic granule exocytosis in effector lymphocytes, thus acting as a critical mediator of inflammation in a broad range of infectious and non-infectious diseases. Essential for cytotoxic degranulation of natural killer (NK) cells and CD8(+) T-cells and for the activation of CD4(+) T-cells following infection. Plays a critical role in CD8(+) T-cell and NK cell-mediated cytolysis of target cells and contributes to the cytolytic activity via the perforin/granzyme pathway by enhancing exocytosis of LAMP1-carrying lytic granules. Contributes to NK cell-mediated control of cancer metastasis. This Homo sapiens (Human) protein is Protein NKG7 (NKG7).